The primary structure comprises 291 residues: Pre-mRNA-splicing factor SPP381 (291 aa).

2 disordered regions span residues 1 to 99 and 239 to 266; these read MSFR…PLPR and EKEK…YKIT. Composition is skewed to polar residues over residues 28-41 and 52-62; these read QNVS…SLSH and TGKNRTPNDGQ. Positions 63–91 are enriched in acidic residues; it reads ESNESDGSPESDESPESEESSDNSDSSDS. The segment covering 239 to 258 has biased composition (basic and acidic residues); that stretch reads EKEKLDHKKQRSAEKVEKSH.

The protein belongs to the SPP381 family. As to quaternary structure, component of the U4/U6-U5 tri-snRNP complex composed of the U4, U6 and U5 snRNAs and at least PRP3, PRP4, PRP6, PRP8, PRP18, PRP31, PRP38, SNU13, SNU23, SNU66, SNU114, SPP381, SMB1, SMD1, SMD2, SMD3, SMX2, SMX3, LSM2, LSM3, LSM4, LSM5, LSM6, LSM7, LSM8, BRR2 and DIB1. Interacts with PRP38.

The protein resides in the nucleus. Component of the spliceosome and rRNA processing machinery. In association with the spliceosomal U4/U6.U5 tri-snRNP particle, required for splicing of pre-mRNA. The chain is Pre-mRNA-splicing factor SPP381 (SPP381) from Saccharomyces cerevisiae (strain ATCC 204508 / S288c) (Baker's yeast).